We begin with the raw amino-acid sequence, 417 residues long: UPF0597 protein Cphy_1256 (417 aa).

Belongs to the UPF0597 family.

The sequence is that of UPF0597 protein Cphy_1256 from Lachnoclostridium phytofermentans (strain ATCC 700394 / DSM 18823 / ISDg) (Clostridium phytofermentans).